The following is a 149-amino-acid chain: Deoxyuridine 5'-triphosphate nucleotidohydrolase (149 aa).

Residues Arg68–Gly70, Asn81, Thr85–Asp87, and Lys95 each bind substrate.

The protein belongs to the dUTPase family. It depends on Mg(2+) as a cofactor.

It catalyses the reaction dUTP + H2O = dUMP + diphosphate + H(+). It functions in the pathway pyrimidine metabolism; dUMP biosynthesis; dUMP from dCTP (dUTP route): step 2/2. Functionally, this enzyme is involved in nucleotide metabolism: it produces dUMP, the immediate precursor of thymidine nucleotides and it decreases the intracellular concentration of dUTP so that uracil cannot be incorporated into DNA. In Bdellovibrio bacteriovorus (strain ATCC 15356 / DSM 50701 / NCIMB 9529 / HD100), this protein is Deoxyuridine 5'-triphosphate nucleotidohydrolase.